A 207-amino-acid chain; its full sequence is Testis-expressed protein 35 (207 aa).

Residues 43 to 79 adopt a coiled-coil conformation; it reads RKGMTRELKNELREVREQLTEKMEEIKQIKDIMDKDF.

In terms of tissue distribution, testis-specific. Expressed during spermatogenesis.

It localises to the nucleus. This chain is Testis-expressed protein 35 (Tex35), found in Mus musculus (Mouse).